A 717-amino-acid chain; its full sequence is DNA polymerase iota (717 aa).

The segment at 1–22 is disordered; that stretch reads MEPLHAGAAGSSRAVCSQGPPT. The UmuC domain occupies 30 to 243; the sequence is IVHVDLDCFY…NHIKEIPGIG (214 aa). Mg(2+) is bound by residues Asp-34 and Leu-35. Residues Tyr-39 and Arg-71 each coordinate a 2'-deoxyribonucleoside 5'-triphosphate. Residue Asp-126 participates in Mg(2+) binding. The active-site Proton acceptor is the Glu-127. DNA-binding stretches follow at residues 300–307 and 343–360; these read QSFSEEDT and RLVIRRYSDKHCNRESRQ. The Ubiquitin-binding 1 (UBM1) motif lies at 500 to 517; it reads VDQEVFKQLPADIQEEIL. Disordered regions lie at residues 549–589, 603–622, and 644–687; these read QMQA…SHPS, KDEQTSQGPTESQGCQFSST, and HRTV…DIDP. Residues 575–589 are compositionally biased toward low complexity; the sequence is PGTSGLSPGSTSHPS. 2 stretches are compositionally biased toward polar residues: residues 607-622 and 652-662; these read TSQGPTESQGCQFSST and QTATASHQGLE. Over residues 665–679 the composition is skewed to basic and acidic residues; sequence QGLESRELDSAEEKL. The Ubiquitin-binding 2 (UBM2) motif lies at 685 to 702; sequence IDPQVFYELPEEVQKELM.

It belongs to the DNA polymerase type-Y family. In terms of assembly, interacts with POLH. Interacts with REV1. Interacts with ubiquitin. Requires Mg(2+) as cofactor. It depends on Mn(2+) as a cofactor. In terms of processing, monoubiquitinated. Protein monoubiquitination prevents POLI binding to ubiquitin via the ubiquitin-binding motif 1 and ubiquitin-binding motif 2. Detected in testis, and at very low levels in spleen, lung and brain. Detected in round spermatids, but not in prophase spermatocytes.

It is found in the nucleus. The enzyme catalyses DNA(n) + a 2'-deoxyribonucleoside 5'-triphosphate = DNA(n+1) + diphosphate. In terms of biological role, error-prone DNA polymerase specifically involved in DNA repair. Plays an important role in translesion synthesis, where the normal high-fidelity DNA polymerases cannot proceed and DNA synthesis stalls. Favors Hoogsteen base-pairing in the active site. Inserts the correct base with high-fidelity opposite an adenosine template. Exhibits low fidelity and efficiency opposite a thymidine template, where it will preferentially insert guanosine. May play a role in hypermutation of immunoglobulin genes. Forms a Schiff base with 5'-deoxyribose phosphate at abasic sites, but may not have lyase activity. The polypeptide is DNA polymerase iota (Poli) (Mus musculus (Mouse)).